The following is a 561-amino-acid chain: Centromere protein T (561 aa).

Positions 1–83 (MADHNPDSDS…HIQASGHLEE (83 aa)) are disordered. Over residues 18-27 (RVLDTADPRT) the composition is skewed to basic and acidic residues. Residues 34–46 (ARAGARRALLETA) are compositionally biased toward low complexity. The residue at position 47 (serine 47) is a Phosphoserine. Threonine 85 carries the phosphothreonine modification. Positions 93–421 (ILLTAPESSI…RHHQFLEPAP (329 aa)) are flexible stalk domain. 2 disordered regions span residues 256-292 (HSLP…PGKP) and 333-457 (AEKK…DPHK). Residues 276–288 (KTQSSGPGLQKNS) show a composition bias toward polar residues. Phosphoserine is present on residues serine 343, serine 345, and serine 356. The segment covering 357 to 367 (RVEEAEGHTEV) has biased composition (basic and acidic residues). A phosphoserine mark is found at serine 373, serine 385, serine 386, and serine 397. The span at 395–407 (AASPESASSTPES) shows a compositional bias: low complexity.

This sequence belongs to the CENP-T/CNN1 family. As to quaternary structure, component of the CENPA-CAD complex, composed of CENPI, CENPK, CENPL, CENPO, CENPP, CENPQ, CENPR and CENPS. The CENPA-CAD complex is probably recruited on centromeres by the CENPA-NAC complex, at least composed of CENPA, CENPC, CENPH, CENPM, CENPN, CENPT and CENPU. Identified in a centromeric complex containing histones H2A, H2B, H3 and H4, and at least CENPA, CENPB, CENPC, CENPT, CENPN, HJURP, SUPT16H, SSRP1 and RSF1. Interacts (via N-terminus) with the NDC80 complex. Heterodimer with CENPW; this dimer coassembles with CENPS-CENPX heterodimers at centromeres to form the tetrameric CENP-T-W-S-X complex. Dynamically phosphorylated at Ser-47 and probably also other sites during the cell cycle. Phosphorylated at Ser-47 during G2 phase, metaphase and anaphase, but not during telophase or G1 phase.

It is found in the nucleus. The protein localises to the chromosome. It localises to the centromere. Its subcellular location is the kinetochore. In terms of biological role, component of the CENPA-NAC (nucleosome-associated) complex, a complex that plays a central role in assembly of kinetochore proteins, mitotic progression and chromosome segregation. The CENPA-NAC complex recruits the CENPA-CAD (nucleosome distal) complex and may be involved in incorporation of newly synthesized CENPA into centromeres. Part of a nucleosome-associated complex that binds specifically to histone H3-containing nucleosomes at the centromere, as opposed to nucleosomes containing CENPA. Component of the heterotetrameric CENP-T-W-S-X complex that binds and supercoils DNA, and plays an important role in kinetochore assembly. CENPT has a fundamental role in kinetochore assembly and function. It is one of the inner kinetochore proteins, with most further proteins binding downstream. Required for normal chromosome organization and normal progress through mitosis. This Homo sapiens (Human) protein is Centromere protein T (CENPT).